A 99-amino-acid polypeptide reads, in one-letter code: Large ribosomal subunit protein bL21 (99 aa).

It belongs to the bacterial ribosomal protein bL21 family. Part of the 50S ribosomal subunit. Contacts protein L20.

Its function is as follows. This protein binds to 23S rRNA in the presence of protein L20. This chain is Large ribosomal subunit protein bL21, found in Acholeplasma laidlawii (strain PG-8A).